A 210-amino-acid polypeptide reads, in one-letter code: Large ribosomal subunit protein uL15 (210 aa).

2 disordered regions span residues 1-64 (MADD…AAPR) and 76-104 (AAGA…TKGT). Residues 9 to 54 (EAAAKPVAEKATATALAKKAPAKAAAADKAAPAAKGETVAAKPAKA) show a composition bias toward low complexity. Basic and acidic residues predominate over residues 79–93 (AKKEKTRVGRGEGSK).

This sequence belongs to the universal ribosomal protein uL15 family. Part of the 50S ribosomal subunit.

In terms of biological role, binds to the 23S rRNA. In Leifsonia xyli subsp. xyli (strain CTCB07), this protein is Large ribosomal subunit protein uL15.